The primary structure comprises 152 residues: 3-dehydroquinate dehydratase (152 aa).

Residue Tyr-23 is the Proton acceptor of the active site. Positions 75, 81, and 88 each coordinate substrate. The active-site Proton donor is His-101. Substrate-binding positions include 102-103 (IS) and Arg-112.

This sequence belongs to the type-II 3-dehydroquinase family. In terms of assembly, homododecamer.

The enzyme catalyses 3-dehydroquinate = 3-dehydroshikimate + H2O. Its pathway is metabolic intermediate biosynthesis; chorismate biosynthesis; chorismate from D-erythrose 4-phosphate and phosphoenolpyruvate: step 3/7. In terms of biological role, catalyzes a trans-dehydration via an enolate intermediate. This chain is 3-dehydroquinate dehydratase, found in Alkalilimnicola ehrlichii (strain ATCC BAA-1101 / DSM 17681 / MLHE-1).